A 644-amino-acid polypeptide reads, in one-letter code: MFQDNPLLAQLKQQLHSQTPRAEGVVKATEKGFGFLEVDAQKSYFIPPPQMKKVMHGDRIVAVIHTEKERESAEPEELIEPFLTRFVGKVQGKNDRLSIVPDHPLLKDAIPCRAARGVQHEFKEGDWAVAEMRRHPLKGDRSFYADLTQYITFADDHFVPWWVTLARHNLEKEAPNGVATEMLDEGLERQDLTALNFVTIDSASTEDMDDALYAEELADGRLQLTVAIADPTAWIAEGSKLDNTAKIRAFTNYLPGFNIPMLPRELSDDLCSLRANEVRPALACRMIIAADGTIDDDIAFFAATIESKAKLAYDNVSDWLENNGTWQPDNEGIAQQIRLLHRICLSRSEWRHHHALVFKDRPDYRFVLGEKGEVLDIVAEPRRIANRIVEESMIAANLCAARVLRDKLGFGIYNVHTGFDPANADALAALLKTHGLHVDAEEVLTLEGFCKLRRELDAQPSGFLDSRIRRFQSFAEISTEPGPHFGLGLEAYATWTSPIRKYGDMINHRLLKAVIKGEAIARPQEDITQQMAERRRLNRMAERDVGDWLYARFLNDKAGTNTRFAAEIIDVSRGGMRVRLVDNGAIAFIPAPFLHAVRDALVCSQENGTVQIKGETVYKVTDVIDVTIAEVRMETRSIIARPAA.

The RNB domain maps to 189-516 (RQDLTALNFV…NHRLLKAVIK (328 aa)). One can recognise an S1 motif domain in the interval 561–643 (NTRFAAEIID…ETRSIIARPA (83 aa)).

It belongs to the RNR ribonuclease family. RNase II subfamily.

It localises to the cytoplasm. The enzyme catalyses Exonucleolytic cleavage in the 3'- to 5'-direction to yield nucleoside 5'-phosphates.. Functionally, involved in mRNA degradation. Hydrolyzes single-stranded polyribonucleotides processively in the 3' to 5' direction. In Salmonella choleraesuis (strain SC-B67), this protein is Exoribonuclease 2.